The primary structure comprises 360 residues: Protein phosphatase 1L (360 aa).

Residues methionine 1–threonine 25 are Extracellular-facing. Residues leucine 26–threonine 42 form a helical membrane-spanning segment. Over aspartate 43–glutamine 360 the chain is Cytoplasmic. A PPM-type phosphatase domain is found at asparagine 92 to phenylalanine 351. Mn(2+) is bound by residues aspartate 128, glycine 129, aspartate 302, and aspartate 342.

This sequence belongs to the PP2C family. Interacts with MAP3K7/TAK1. Interacts with MAP3K5. It depends on Mg(2+) as a cofactor. Mn(2+) serves as cofactor. As to expression, ubiquitous. Highly expressed in heart, placenta, lung, liver, kidney and pancreas.

It localises to the membrane. It catalyses the reaction O-phospho-L-seryl-[protein] + H2O = L-seryl-[protein] + phosphate. The enzyme catalyses O-phospho-L-threonyl-[protein] + H2O = L-threonyl-[protein] + phosphate. Acts as a suppressor of the SAPK signaling pathways by associating with and dephosphorylating MAP3K7/TAK1 and MAP3K5, and by attenuating the association between MAP3K7/TAK1 and MAP2K4 or MAP2K6. This chain is Protein phosphatase 1L (PPM1L), found in Homo sapiens (Human).